A 103-amino-acid chain; its full sequence is UPF0145 protein BCE33L0904 (103 aa).

This sequence belongs to the UPF0145 family.

The polypeptide is UPF0145 protein BCE33L0904 (Bacillus cereus (strain ZK / E33L)).